The following is a 327-amino-acid chain: Sideroflexin FSF1 (327 aa).

Ala-2 is subject to N-acetylalanine. 4 consecutive transmembrane segments (helical) span residues 98 to 118 (NLVV…TVFW), 143 to 163 (SQLL…ALGL), 179 to 199 (LILG…VNVF), and 272 to 292 (ANLG…LGIF).

This sequence belongs to the sideroflexin family.

Its subcellular location is the mitochondrion membrane. In terms of biological role, mitochondrial amino-acid transporter that mediates transport of serine into mitochondria. In Saccharomyces cerevisiae (strain ATCC 204508 / S288c) (Baker's yeast), this protein is Sideroflexin FSF1.